Reading from the N-terminus, the 660-residue chain is Macrolide export ATP-binding/permease protein MacB (660 aa).

Residues 10–248 (LVLENIVRKF…AKGQALQGKQ (239 aa)) form the ABC transporter domain. ATP is bound at residue 46–53 (GASGSGKS). A run of 4 helical transmembrane segments spans residues 285–305 (FLTM…VALG), 532–552 (ILTL…GIGV), 593–613 (IIGG…FVLF), and 625–645 (SIII…FSPA).

Belongs to the ABC transporter superfamily. Macrolide exporter (TC 3.A.1.122) family. In terms of assembly, homodimer.

It localises to the cell inner membrane. Its function is as follows. Non-canonical ABC transporter that contains transmembrane domains (TMD), which form a pore in the inner membrane, and an ATP-binding domain (NBD), which is responsible for energy generation. Confers resistance against macrolides. The sequence is that of Macrolide export ATP-binding/permease protein MacB from Bartonella quintana (strain Toulouse) (Rochalimaea quintana).